The chain runs to 437 residues: Phosphomethylpyrimidine synthase (437 aa).

Residues Asn-69, Met-98, Tyr-127, His-163, 185–187 (SRG), 226–229 (DACR), and Glu-265 contribute to the substrate site. Position 269 (His-269) interacts with Zn(2+). Tyr-292 contacts substrate. His-333 lines the Zn(2+) pocket. 3 residues coordinate [4Fe-4S] cluster: Cys-409, Cys-412, and Cys-416.

Belongs to the ThiC family. Requires [4Fe-4S] cluster as cofactor.

It catalyses the reaction 5-amino-1-(5-phospho-beta-D-ribosyl)imidazole + S-adenosyl-L-methionine = 4-amino-2-methyl-5-(phosphooxymethyl)pyrimidine + CO + 5'-deoxyadenosine + formate + L-methionine + 3 H(+). The protein operates within cofactor biosynthesis; thiamine diphosphate biosynthesis. Functionally, catalyzes the synthesis of the hydroxymethylpyrimidine phosphate (HMP-P) moiety of thiamine from aminoimidazole ribotide (AIR) in a radical S-adenosyl-L-methionine (SAM)-dependent reaction. In Clostridium botulinum (strain Loch Maree / Type A3), this protein is Phosphomethylpyrimidine synthase.